A 580-amino-acid chain; its full sequence is MHLSAVLNALLVSVLAAVLWKHVRLREHAAALEEEVAAGRQAPAPGPAPRADYARALQLLSEGGTHMVCTGRTHTDRVCRFKWLCYSNEAEEFIFFHGNASVMLPNLGSRRFQPALLDLSTVEDHNTQYFNFVELPAAALRFLPKPVFVPDVALVANRFNPDNLMHVFHDDLLPLFYTLRQFPGLAHEARLFFMEGWSEGAHFDLYKLLSPKQPLLRAQLKTLGRLLCFSHAFVGLSKVTTWYQYGFVQPQGPKANILVSGNEIRQFARFMMEKLNVSQAGAPLGEEYILVFSRTQNRLILNEAELLLALAQEFQMKTVTVSLEDQAFADVVRLVSNASMLVSVHGAQLVTALFLPRGATVVELFPYAVNPDHYTPYKTLATLPGMDLQYVAWRNMMPENTVTHPERPWDQGGIAHLDRAEQARILQSREVPRHLCCRNPEWLFRIYQDTKVDIPSLIQTVRRVVKGRPGPRKQKWTVGLYPGKVREARCQASVQGASEARLTVSWQIPWNLKYLKVREVKYEVWLQEQGENTYVPYILALQNHTFTENIKPFTTYLVWVRCIFNKTLLGPFADVLVCNT.

The Cytoplasmic portion of the chain corresponds to 1–4 (MHLS). A helical; Signal-anchor for type II membrane protein membrane pass occupies residues 5–25 (AVLNALLVSVLAAVLWKHVRL). The Lumenal segment spans residues 26–580 (REHAAALEEE…PFADVLVCNT (555 aa)). N-linked (GlcNAc...) asparagine glycans are attached at residues asparagine 99 and asparagine 276. A Fibronectin type-III domain is found at 488 to 580 (ARCQASVQGA…PFADVLVCNT (93 aa)).

The protein belongs to the glycosyltransferase 61 family.

The protein resides in the endoplasmic reticulum membrane. The enzyme catalyses 3-O-(alpha-D-mannosyl)-L-threonyl-[protein] + UDP-N-acetyl-alpha-D-glucosamine = 3-O-(N-acetyl-beta-D-glucosaminyl-(1-&gt;4)-alpha-D-mannosyl)-L-threonyl-[protein] + UDP + H(+). Its pathway is protein modification; protein glycosylation. In terms of biological role, O-linked mannose beta-1,4-N-acetylglucosaminyltransferase that transfers UDP-N-acetyl-D-glucosamine to the 4-position of the mannose to generate N-acetyl-D-glucosamine-beta-1,4-O-D-mannosylprotein. Involved in the biosynthesis of the phosphorylated O-mannosyl trisaccharide (N-acetylgalactosamine-beta-3-N-acetylglucosamine-beta-4-(phosphate-6-)mannose), a carbohydrate structure present in alpha-dystroglycan (DAG1), which is required for binding laminin G-like domain-containing extracellular proteins with high affinity. This is Protein O-linked-mannose beta-1,4-N-acetylglucosaminyltransferase 2 (POMGNT2) from Canis lupus familiaris (Dog).